We begin with the raw amino-acid sequence, 408 residues long: Imidazolonepropionase (408 aa).

Fe(3+)-binding residues include His73 and His75. Positions 73 and 75 each coordinate Zn(2+). Arg82, Tyr145, and His178 together coordinate 4-imidazolone-5-propanoate. Tyr145 provides a ligand contact to N-formimidoyl-L-glutamate. Fe(3+) is bound at residue His243. His243 is a Zn(2+) binding site. Residue Gln246 coordinates 4-imidazolone-5-propanoate. A Fe(3+)-binding site is contributed by Asp318. Asp318 is a binding site for Zn(2+). N-formimidoyl-L-glutamate is bound by residues Asn320 and Gly322. Ser323 contributes to the 4-imidazolone-5-propanoate binding site.

This sequence belongs to the metallo-dependent hydrolases superfamily. HutI family. Zn(2+) is required as a cofactor. Fe(3+) serves as cofactor.

It is found in the cytoplasm. The enzyme catalyses 4-imidazolone-5-propanoate + H2O = N-formimidoyl-L-glutamate. The protein operates within amino-acid degradation; L-histidine degradation into L-glutamate; N-formimidoyl-L-glutamate from L-histidine: step 3/3. Its function is as follows. Catalyzes the hydrolytic cleavage of the carbon-nitrogen bond in imidazolone-5-propanoate to yield N-formimidoyl-L-glutamate. It is the third step in the universal histidine degradation pathway. The sequence is that of Imidazolonepropionase from Shewanella sediminis (strain HAW-EB3).